Consider the following 797-residue polypeptide: MQEGNFLLSALQPETGVCSLALPSDLQLDRRGAEGPEADRLRAARVQEQVRARLLQLGQQSRHNGSAELDGSAESARGMPRGQYHTMQTGFSSRSQGMSGDKTSTFRPIAKPAYSPASWSSRSAVDLTCSRRLSSAHNGGSAFGAVGYGGTQPTPPMPTRPVSFHERGGAASRADYDTLSLRSLRLGPGGLDDRYSVVSEQLEPAAASTYRAYAYERQASSGSSRAGGLDWPEATEGPPSRTIRAPAMRTLQRFQSSHRSRGGTGSVSGAGLEPVARAPSVRSLSLSLADSGHLPDVRGLDSYTGHRTLQRLSSGFDDIDLPSAVKYLMASDPNLQVLGAAYIQHRCYSDAAAKKQARSLQAVPRLVKLFNHANQEVQRHATGAMRNLIYDNVDNKLALVEENGIFELLRTLREQDDELRKNVTGILWNLSSSDHLKDRLARDTLEQLTDLVLSPLSGAGGPPLIQQNASEAEIFYNATGFLRNLSSASQATRQKMRECHGLVDALVTYINHALDVGKCEDKSVENAVCVLRNLSYRLYDEMPPSALQRLEGRGRRDMAGAPPGEMVGCFTPQSRRLRELPLTADALTFAEVSKDPKGLEWLWSPQIVGLYNRLLQRCELNRHTTEAAAGALQNITAGDRRWAGVLSRLALEQERILNPLLDRVRTADHNQLRSLTGLIRNLSRNARNKDEMSTKVVSHLIEKLPGSVGEKCPPAEVLVNIIAVLNNLVVASPIAARDLLYFDGLRKLVFIKKKRDSPDSEKSSRAASSLLANLWQYSKLHRDFRAKGYRKEDFLGP.

The segment at 58–81 (GQQSRHNGSAELDGSAESARGMPR) is disordered. At Arg-81 the chain carries Omega-N-methylarginine. Phosphoserine occurs at positions 123, 180, and 183. At Tyr-195 the chain carries Phosphotyrosine. Positions 219 to 228 (ASSGSSRAGG) are enriched in low complexity. Positions 219–241 (ASSGSSRAGGLDWPEATEGPPSR) are disordered. Ser-240 bears the Phosphoserine mark. Thr-250 is subject to Phosphothreonine. The interval 253-274 (RFQSSHRSRGGTGSVSGAGLEP) is disordered. Omega-N-methylarginine is present on Arg-261. Residues 283-288 (SLSLSL) are required for interaction with SFN. Residues Ser-285, Ser-313, Ser-314, and Ser-331 each carry the phosphoserine modification. Residues 294–724 (LPDVRGLDSY…AEVLVNIIAV (431 aa)) form a required for interaction with GSK3B region. ARM repeat units lie at residues 305–348 (GHRT…HRCY), 351–390 (AAAK…NLIY), 393–432 (VDNK…NLSS), 449–487 (TDLV…NLSS), 491–536 (ATRQ…NLSY), 596–637 (PKGL…NITA), 645–684 (VLSR…NLSR), and 689–730 (KDEM…NLVV). A required for binding to PKP2 mRNA region spans residues 516 to 797 (VGKCEDKSVE…GYRKEDFLGP (282 aa)).

Belongs to the beta-catenin family. Found in a complex composed of CDH1, RAP1A and PKP3; PKP3 acts as a scaffold protein within the complex, the complex is required for CDH1 localization to mature desmosome cell junctions. Interacts with FXR1; the interaction facilitates the binding of PKP3 to PKP2 mRNA. Interacts (via ARM repeats) with GSK3B; the interaction may be involved in PKP3 protein degradation. Interacts with hyperphosphorylated and hypophosphorylated RB1; the interaction inhibits RB1 interaction with and repression of the transcription factor E2F1, potentially via sequestering RB1 to the cytoplasm. Interacts with CDKN1A; the interaction sequesters CDKN1A to the cytoplasm thereby repressing its role as an inhibitor of CDK4- and CDK6-driven RB1 phosphorylation. Interacts (via N-terminus) with SFN; the interaction maintains the cytoplasmic pool of PKP3, facilitates PKP3 exchange at desmosomes and restricts PKP3 localization to existing desmosome cell junctions. Interacts (via N-terminus) with JUP; the interaction is required for PKP3 localization to desmosome cell-cell junctions. Phosphorylated at Ser-285 when localized to the cytoplasm, PKP3 at desmosome cell junctions is not phosphorylated. Phosphorylation at Try-195 by SRC is induced by reactive oxygen species and potentially acts as a release mechanism from desmosome cell-cell junctions. Expressed in all layers of the epidermis, but is most abundant in the basal layer (at protein level). Expressed in keratinocytes of the epidermis at birth (at protein level). Expressed in the anagen non-keratinized inner root sheath cuticle and hair cuticle (at protein level). Also expressed in the matrix, precursors of the inner root sheath and hair shaft lineages (at protein level). Expressed at apical membranes in the outer hair root sheath and basal layer keratinocytes (at protein level). Expressed in intestinal epithelial cells and lamina propria of the ileum (at protein level). Expressed in keratinocytes (at protein level).

It is found in the nucleus. The protein resides in the cell junction. Its subcellular location is the desmosome. It localises to the cytoplasm. The protein localises to the cell membrane. It is found in the adherens junction. Its function is as follows. A component of desmosome cell-cell junctions which are required for positive regulation of cellular adhesion. Required for the localization of DSG2, DSP and PKP2 to mature desmosome junctions. May also play a role in the maintenance of DSG3 protein abundance in keratinocytes. Required for the formation of DSP-containing desmosome precursors in the cytoplasm during desmosome assembly. Also regulates the accumulation of CDH1 to mature desmosome junctions, via cAMP-dependent signaling and its interaction with activated RAP1A. Positively regulates the stabilization of PKP2 mRNA and therefore protein abundance, via its interaction with FXR1, may also regulate the protein abundance of DSP via the same mechanism. May also regulate the protein abundance of the desmosome component PKP1. Required for the organization of desmosome junctions at intercellular borders between basal keratinocytes of the epidermis, as a result plays a role in maintenance of the dermal barrier and regulation of the dermal inflammatory response. Required during epidermal keratinocyte differentiation for cell adherence at tricellular cell-cell contacts, via regulation of the timely formation of adherens junctions and desmosomes in a calcium-dependent manner, and may also play a role in the organization of the intracellular actin fiber belt. Acts as a negative regulator of the inflammatory response in hematopoietic cells of the skin and intestine, via modulation of proinflammatory cytokine production. Important for epithelial barrier maintenance in the intestine to reduce intestinal permeability, thereby plays a role in protection from intestinal-derived endotoxemia. Required for the development of hair follicles, via a role in the regulation of inner root sheaf length, correct alignment and anterior-posterior polarity of hair follicles. Promotes proliferation and cell-cycle G1/S phase transition of keratinocytes. Promotes E2F1-driven transcription of G1/S phase promoting genes by acting to release E2F1 from its inhibitory interaction with RB1, via sequestering RB1 and CDKN1A to the cytoplasm and thereby increasing CDK4- and CDK6-driven phosphorylation of RB1. May act as a scaffold protein to facilitate MAPK phosphorylation of RPS6KA protein family members and subsequently promote downstream EGFR signaling. May play a role in the positive regulation of transcription of Wnt-mediated TCF-responsive target genes. The sequence is that of Plakophilin-3 (Pkp3) from Mus musculus (Mouse).